A 746-amino-acid chain; its full sequence is UvrABC system protein C (746 aa).

Residues 18–97 form the GIY-YIG domain; the sequence is AKPGVYKWRD…IKEFDPRFNV (80 aa). Residues 211–246 enclose the UVR domain; the sequence is RPYIAQLTRDMKEASAELEFEKAARLRDQIQMLETV. The tract at residues 557-577 is disordered; sequence ANGNDNGEGGSDISGKGHAVP.

This sequence belongs to the UvrC family. In terms of assembly, interacts with UvrB in an incision complex.

It localises to the cytoplasm. In terms of biological role, the UvrABC repair system catalyzes the recognition and processing of DNA lesions. UvrC both incises the 5' and 3' sides of the lesion. The N-terminal half is responsible for the 3' incision and the C-terminal half is responsible for the 5' incision. This chain is UvrABC system protein C, found in Bifidobacterium longum (strain DJO10A).